A 129-amino-acid chain; its full sequence is MAAKKVSRKRRVKKNIESGVAHIHSTFNNTIVMITDTHGNALAWSSAGSLGFKGSKKSTPFAAQMAAEAATKVAMEHGLKTVDVTVKGPGSGREAAIRSLQATGLEVTAIRDVTPVPHNGCRPPKRRRV.

The protein belongs to the universal ribosomal protein uS11 family. Part of the 30S ribosomal subunit. Interacts with proteins S7 and S18. Binds to IF-3.

Its function is as follows. Located on the platform of the 30S subunit, it bridges several disparate RNA helices of the 16S rRNA. Forms part of the Shine-Dalgarno cleft in the 70S ribosome. The polypeptide is Small ribosomal subunit protein uS11 (Enterococcus faecalis (strain ATCC 700802 / V583)).